The sequence spans 115 residues: Cytochrome c oxidase subunit 3 (115 aa).

Transmembrane regions (helical) follow at residues 32 to 52 (CLQG…LQGL) and 70 to 90 (FFLA…FLMI).

The protein belongs to the cytochrome c oxidase subunit 3 family. In terms of assembly, component of the cytochrome c oxidase (complex IV, CIV), a multisubunit enzyme composed of a catalytic core of 3 subunits and several supernumerary subunits. The complex exists as a monomer or a dimer and forms supercomplexes (SCs) in the inner mitochondrial membrane with ubiquinol-cytochrome c oxidoreductase (cytochrome b-c1 complex, complex III, CIII).

Its subcellular location is the mitochondrion inner membrane. It catalyses the reaction 4 Fe(II)-[cytochrome c] + O2 + 8 H(+)(in) = 4 Fe(III)-[cytochrome c] + 2 H2O + 4 H(+)(out). Its function is as follows. Component of the cytochrome c oxidase, the last enzyme in the mitochondrial electron transport chain which drives oxidative phosphorylation. The respiratory chain contains 3 multisubunit complexes succinate dehydrogenase (complex II, CII), ubiquinol-cytochrome c oxidoreductase (cytochrome b-c1 complex, complex III, CIII) and cytochrome c oxidase (complex IV, CIV), that cooperate to transfer electrons derived from NADH and succinate to molecular oxygen, creating an electrochemical gradient over the inner membrane that drives transmembrane transport and the ATP synthase. Cytochrome c oxidase is the component of the respiratory chain that catalyzes the reduction of oxygen to water. Electrons originating from reduced cytochrome c in the intermembrane space (IMS) are transferred via the dinuclear copper A center (CU(A)) of subunit 2 and heme A of subunit 1 to the active site in subunit 1, a binuclear center (BNC) formed by heme A3 and copper B (CU(B)). The BNC reduces molecular oxygen to 2 water molecules using 4 electrons from cytochrome c in the IMS and 4 protons from the mitochondrial matrix. The protein is Cytochrome c oxidase subunit 3 (COIII) of Artemia salina (Brine shrimp).